A 180-amino-acid chain; its full sequence is Crossover junction endodeoxyribonuclease RuvC (180 aa).

Catalysis depends on residues D7, E66, and D138. The Mg(2+) site is built by D7, E66, and D138.

This sequence belongs to the RuvC family. Homodimer which binds Holliday junction (HJ) DNA. The HJ becomes 2-fold symmetrical on binding to RuvC with unstacked arms; it has a different conformation from HJ DNA in complex with RuvA. In the full resolvosome a probable DNA-RuvA(4)-RuvB(12)-RuvC(2) complex forms which resolves the HJ. Mg(2+) serves as cofactor.

The protein resides in the cytoplasm. The enzyme catalyses Endonucleolytic cleavage at a junction such as a reciprocal single-stranded crossover between two homologous DNA duplexes (Holliday junction).. The RuvA-RuvB-RuvC complex processes Holliday junction (HJ) DNA during genetic recombination and DNA repair. Endonuclease that resolves HJ intermediates. Cleaves cruciform DNA by making single-stranded nicks across the HJ at symmetrical positions within the homologous arms, yielding a 5'-phosphate and a 3'-hydroxyl group; requires a central core of homology in the junction. The consensus cleavage sequence is 5'-(A/T)TT(C/G)-3'. Cleavage occurs on the 3'-side of the TT dinucleotide at the point of strand exchange. HJ branch migration catalyzed by RuvA-RuvB allows RuvC to scan DNA until it finds its consensus sequence, where it cleaves and resolves the cruciform DNA. The protein is Crossover junction endodeoxyribonuclease RuvC of Burkholderia pseudomallei (strain 668).